The chain runs to 98 residues: Integration host factor subunit alpha (98 aa).

The span at 53-69 (DLREKSERPGRNPKTGE) shows a compositional bias: basic and acidic residues. Residues 53–73 (DLREKSERPGRNPKTGEDIPI) form a disordered region.

Belongs to the bacterial histone-like protein family. As to quaternary structure, heterodimer of an alpha and a beta chain.

Functionally, this protein is one of the two subunits of integration host factor, a specific DNA-binding protein that functions in genetic recombination as well as in transcriptional and translational control. This Aliivibrio fischeri (strain ATCC 700601 / ES114) (Vibrio fischeri) protein is Integration host factor subunit alpha.